Here is a 596-residue protein sequence, read N- to C-terminus: MQRSRRALLVRRRVSETTSNGRNRFYKVSLSLVFLIWGLVFLSTLWISHVDGDKGRSLVDSVEKGEPDDERADETAESVDATSLESTSVHSNPGLSSDVDIAAAGESKGSETILKQLEVDNTIVIVGNVTESKDNVPMKQSEINNNTVPGNDTETTGSKLDQLSRAVPLGLDEFKSRASNSRDKSLSGQVTGVIHRMEPGGKEYNYAAASKGAKVLSSNKEAKGASSIICRDKDKYLRNPCSTEGKFVVIELSEETLVNTIKIANFEHYSSNLKDFEILGTLVYPTDTWVHLGNFTALNMKHEQNFTFADPKWVRYLKLNLLSHYGSEFYCTLSLLEVYGVDAVERMLEDLISIQDKNILKLQEGDTEQKEKKTMQAKESFESDEDKSKQKEKEQEASPENAVVKDEVSLEKRKLPDPVEEIKHQPGSRMPGDTVLKILMQKIRSLDVSLSVLESYLEERSLKYGMIFKEMDLEASKREKEVETMRLEVEGMKEREENTKKEAMEMRKWRMRVETELEKAENEKEKVKERLEQVLERLEWMEKKGVVVFTICVGFGTIAVVAVVFGMGIVRAEKQGGLAWLLLLISSTFVMFILSL.

The helical transmembrane segment at 28 to 48 threads the bilayer; the sequence is VSLSLVFLIWGLVFLSTLWIS. Disordered stretches follow at residues 58 to 98 and 139 to 158; these read LVDS…LSSD and KQSE…TTGS. Residues 66-77 are compositionally biased toward acidic residues; that stretch reads EPDDERADETAE. 2 stretches are compositionally biased toward polar residues: residues 80-95 and 141-158; these read DATS…NPGL and SEIN…TTGS. Residues 179–343 form the SUN domain; sequence SNSRDKSLSG…SLLEVYGVDA (165 aa). Residues 366–396 show a composition bias toward basic and acidic residues; that stretch reads DTEQKEKKTMQAKESFESDEDKSKQKEKEQE. Residues 366–410 form a disordered region; sequence DTEQKEKKTMQAKESFESDEDKSKQKEKEQEASPENAVVKDEVSL. The stretch at 475–544 forms a coiled coil; that stretch reads ASKREKEVET…LERLEWMEKK (70 aa). The next 2 membrane-spanning stretches (helical) occupy residues 545-565 and 576-596; these read GVVV…AVVF and GGLA…ILSL.

In terms of assembly, forms homomers and heteromers with SUN3. Interacts with SUN1, SUN2 and TIK.

The protein localises to the nucleus membrane. The protein resides in the endoplasmic reticulum membrane. Its function is as follows. Encodes a member of the mid-SUN subfamily of SUN-domain proteins that is localized to both the nuclear envelope and the ER. It is involved in early seed development and nuclear morphology. [TAIR]. This chain is SUN domain-containing protein 4, found in Arabidopsis thaliana (Mouse-ear cress).